The chain runs to 120 residues: MVSSKEIIQHRAKRVRRQIKAAANGRPRLSVYRSNQNIYAQIIDDVRGCTLASACTLEEGMKKSLRSGSDKKAAFAVGKLIAERAKKSGINEVVFDRGAYVYHGRVKALAEAAREGGLSF.

Belongs to the universal ribosomal protein uL18 family. In terms of assembly, part of the 50S ribosomal subunit; part of the 5S rRNA/L5/L18/L25 subcomplex. Contacts the 5S and 23S rRNAs.

Its function is as follows. This is one of the proteins that bind and probably mediate the attachment of the 5S RNA into the large ribosomal subunit, where it forms part of the central protuberance. This chain is Large ribosomal subunit protein uL18, found in Bartonella bacilliformis (strain ATCC 35685 / KC583 / Herrer 020/F12,63).